Reading from the N-terminus, the 187-residue chain is Crossover junction endodeoxyribonuclease RuvC (187 aa).

Residues D7, E67, and D140 contribute to the active site. Mg(2+) contacts are provided by D7, E67, and D140.

This sequence belongs to the RuvC family. As to quaternary structure, homodimer which binds Holliday junction (HJ) DNA. The HJ becomes 2-fold symmetrical on binding to RuvC with unstacked arms; it has a different conformation from HJ DNA in complex with RuvA. In the full resolvosome a probable DNA-RuvA(4)-RuvB(12)-RuvC(2) complex forms which resolves the HJ. The cofactor is Mg(2+).

The protein localises to the cytoplasm. It catalyses the reaction Endonucleolytic cleavage at a junction such as a reciprocal single-stranded crossover between two homologous DNA duplexes (Holliday junction).. In terms of biological role, the RuvA-RuvB-RuvC complex processes Holliday junction (HJ) DNA during genetic recombination and DNA repair. Endonuclease that resolves HJ intermediates. Cleaves cruciform DNA by making single-stranded nicks across the HJ at symmetrical positions within the homologous arms, yielding a 5'-phosphate and a 3'-hydroxyl group; requires a central core of homology in the junction. The consensus cleavage sequence is 5'-(A/T)TT(C/G)-3'. Cleavage occurs on the 3'-side of the TT dinucleotide at the point of strand exchange. HJ branch migration catalyzed by RuvA-RuvB allows RuvC to scan DNA until it finds its consensus sequence, where it cleaves and resolves the cruciform DNA. This is Crossover junction endodeoxyribonuclease RuvC from Prosthecochloris aestuarii (strain DSM 271 / SK 413).